The chain runs to 559 residues: 5'-AMP-activated protein kinase catalytic subunit alpha-1 (559 aa).

The 253-residue stretch at 27 to 279 folds into the Protein kinase domain; the sequence is YILGDTLGVG…IKDIREHEWF (253 aa). T32 is subject to Phosphothreonine. ATP is bound by residues 33-41 and K56; that span reads LGVGTFGKV. The active-site Proton acceptor is the D150. T183 carries the phosphothreonine; by LKB1 and CaMKK2 modification. A phosphothreonine mark is found at T269 and T355. The interval 302 to 381 is AIS; that stretch reads EALKEVCEKF…PERVPFLVAE (80 aa). Phosphoserine is present on S356. S360 bears the Phosphoserine; by ULK1 mark. T368 bears the Phosphothreonine; by ULK1 mark. Residue T382 is modified to Phosphothreonine. A phosphoserine mark is found at S397, S467, and S486. Residues 485-505 show a composition bias toward polar residues; it reads KSGTATPQRSGSVSNYRSCQR. Residues 485–536 are disordered; it reads KSGTATPQRSGSVSNYRSCQRSDSDAEAQGKSSEVSLTSSVTSLDSSPVDLT. Phosphothreonine occurs at positions 488 and 490. 4 positions are modified to phosphoserine: S496, S508, S524, and S527. A compositionally biased stretch (low complexity) spans 516–535; that stretch reads SSEVSLTSSVTSLDSSPVDL.

The protein belongs to the protein kinase superfamily. CAMK Ser/Thr protein kinase family. SNF1 subfamily. As to quaternary structure, AMPK is a heterotrimer of an alpha catalytic subunit (PRKAA1 or PRKAA2), a beta (PRKAB1 or PRKAB2) and a gamma non-catalytic subunits (PRKAG1, PRKAG2 or PRKAG3). Interacts with FNIP1 and FNIP2. In terms of assembly, (Microbial infection) Interacts with Dengue type 2 virus non-structural protein 1; this interaction promotes the AMPK/ERK/mTOR signaling pathway to induce autophagy. The cofactor is Mg(2+). In terms of processing, ubiquitinated. Phosphorylated at Thr-183 by STK11/LKB1 in complex with STE20-related adapter-alpha (STRADA) pseudo kinase and CAB39. Also phosphorylated at Thr-183 by CAMKK2; triggered by a rise in intracellular calcium ions, without detectable changes in the AMP/ATP ratio. CAMKK1 can also phosphorylate Thr-183, but at a much lower level. Dephosphorylated by protein phosphatase 2A and 2C (PP2A and PP2C). Phosphorylated by ULK1 and ULK2; leading to negatively regulate AMPK activity and suggesting the existence of a regulatory feedback loop between ULK1, ULK2 and AMPK. Dephosphorylated by PPM1A and PPM1B. Post-translationally, glycosylated; O-GlcNAcylated by OGT, promoting the AMP-activated protein kinase (AMPK) activity.

The protein resides in the cytoplasm. Its subcellular location is the nucleus. The enzyme catalyses L-seryl-[protein] + ATP = O-phospho-L-seryl-[protein] + ADP + H(+). The catalysed reaction is L-threonyl-[protein] + ATP = O-phospho-L-threonyl-[protein] + ADP + H(+). It catalyses the reaction L-seryl-[acetyl-CoA carboxylase] + ATP = O-phospho-L-seryl-[acetyl-CoA carboxylase] + ADP + H(+). It carries out the reaction L-seryl-[3-hydroxy-3-methylglutaryl-coenzyme A reductase] + ATP = O-phospho-L-seryl-[3-hydroxy-3-methylglutaryl-coenzyme A reductase] + ADP + H(+). The enzyme catalyses L-seryl-[tau protein] + ATP = O-phospho-L-seryl-[tau protein] + ADP + H(+). The catalysed reaction is L-threonyl-[tau protein] + ATP = O-phospho-L-threonyl-[tau protein] + ADP + H(+). With respect to regulation, activated by phosphorylation on Thr-183. Binding of AMP to non-catalytic gamma subunit (PRKAG1, PRKAG2 or PRKAG3) results in allosteric activation, inducing phosphorylation on Thr-183. AMP-binding to gamma subunit also sustains activity by preventing dephosphorylation of Thr-183. ADP also stimulates Thr-183 phosphorylation, without stimulating already phosphorylated AMPK. ATP promotes dephosphorylation of Thr-183, rendering the enzyme inactive. Under physiological conditions AMPK mainly exists in its inactive form in complex with ATP, which is much more abundant than AMP. AMPK is activated by antihyperglycemic drug metformin, a drug prescribed to patients with type 2 diabetes: in vivo, metformin seems to mainly inhibit liver gluconeogenesis. However, metformin can be used to activate AMPK in muscle and other cells in culture or ex vivo. Selectively inhibited by compound C (6-[4-(2-Piperidin-1-yl-ethoxy)-phenyl)]-3-pyridin-4-yl-pyyrazolo[1,5-a] pyrimidine. Activated by resveratrol, a natural polyphenol present in red wine, and S17834, a synthetic polyphenol. Catalytic subunit of AMP-activated protein kinase (AMPK), an energy sensor protein kinase that plays a key role in regulating cellular energy metabolism. In response to reduction of intracellular ATP levels, AMPK activates energy-producing pathways and inhibits energy-consuming processes: inhibits protein, carbohydrate and lipid biosynthesis, as well as cell growth and proliferation. AMPK acts via direct phosphorylation of metabolic enzymes, and by longer-term effects via phosphorylation of transcription regulators. Regulates lipid synthesis by phosphorylating and inactivating lipid metabolic enzymes such as ACACA, ACACB, GYS1, HMGCR and LIPE; regulates fatty acid and cholesterol synthesis by phosphorylating acetyl-CoA carboxylase (ACACA and ACACB) and hormone-sensitive lipase (LIPE) enzymes, respectively. Promotes lipolysis of lipid droplets by mediating phosphorylation of isoform 1 of CHKA (CHKalpha2). Regulates insulin-signaling and glycolysis by phosphorylating IRS1, PFKFB2 and PFKFB3. AMPK stimulates glucose uptake in muscle by increasing the translocation of the glucose transporter SLC2A4/GLUT4 to the plasma membrane, possibly by mediating phosphorylation of TBC1D4/AS160. Regulates transcription and chromatin structure by phosphorylating transcription regulators involved in energy metabolism such as CRTC2/TORC2, FOXO3, histone H2B, HDAC5, MEF2C, MLXIPL/ChREBP, EP300, HNF4A, p53/TP53, SREBF1, SREBF2 and PPARGC1A. Acts as a key regulator of glucose homeostasis in liver by phosphorylating CRTC2/TORC2, leading to CRTC2/TORC2 sequestration in the cytoplasm. In response to stress, phosphorylates 'Ser-36' of histone H2B (H2BS36ph), leading to promote transcription. Acts as a key regulator of cell growth and proliferation by phosphorylating FNIP1, TSC2, RPTOR, WDR24 and ATG1/ULK1: in response to nutrient limitation, negatively regulates the mTORC1 complex by phosphorylating RPTOR component of the mTORC1 complex and by phosphorylating and activating TSC2. Also phosphorylates and inhibits GATOR2 subunit WDR24 in response to nutrient limitation, leading to suppress glucose-mediated mTORC1 activation. In response to energetic stress, phosphorylates FNIP1, inactivating the non-canonical mTORC1 signaling, thereby promoting nuclear translocation of TFEB and TFE3, and inducing transcription of lysosomal or autophagy genes. In response to nutrient limitation, promotes autophagy by phosphorylating and activating ATG1/ULK1. In that process, it also activates WDR45/WIPI4. Phosphorylates CASP6, thereby preventing its autoprocessing and subsequent activation. In response to nutrient limitation, phosphorylates transcription factor FOXO3 promoting FOXO3 mitochondrial import. Also acts as a regulator of cellular polarity by remodeling the actin cytoskeleton; probably by indirectly activating myosin. AMPK also acts as a regulator of circadian rhythm by mediating phosphorylation of CRY1, leading to destabilize it. May regulate the Wnt signaling pathway by phosphorylating CTNNB1, leading to stabilize it. Also has tau-protein kinase activity: in response to amyloid beta A4 protein (APP) exposure, activated by CAMKK2, leading to phosphorylation of MAPT/TAU; however the relevance of such data remains unclear in vivo. Also phosphorylates CFTR, EEF2K, KLC1, NOS3 and SLC12A1. Regulates hepatic lipogenesis. Activated via SIRT3, represses sterol regulatory element-binding protein (SREBP) transcriptional activities and ATP-consuming lipogenesis to restore cellular energy balance. Upon stress, regulates mitochondrial fragmentation through phosphorylation of MTFR1L. The chain is 5'-AMP-activated protein kinase catalytic subunit alpha-1 from Homo sapiens (Human).